The primary structure comprises 635 residues: Biosynthetic arginine decarboxylase (635 aa).

N6-(pyridoxal phosphate)lysine is present on Lys101. Residue 284–294 (VDVGGGLGVDY) coordinates substrate.

It belongs to the Orn/Lys/Arg decarboxylase class-II family. SpeA subfamily. The cofactor is Mg(2+). It depends on pyridoxal 5'-phosphate as a cofactor.

The catalysed reaction is L-arginine + H(+) = agmatine + CO2. It functions in the pathway amine and polyamine biosynthesis; agmatine biosynthesis; agmatine from L-arginine: step 1/1. Its function is as follows. Catalyzes the biosynthesis of agmatine from arginine. This is Biosynthetic arginine decarboxylase from Tolumonas auensis (strain DSM 9187 / NBRC 110442 / TA 4).